Reading from the N-terminus, the 367-residue chain is Small ribosomal subunit protein uS2 (367 aa).

The interval 1–68 (MPKKAEAKTG…NSTPSTGSKF (68 aa)) is disordered. Residues 21–40 (AKKDVKAEVNETNKTAEKVS) show a composition bias toward basic and acidic residues. Residues 53-66 (TNESSSNSTPSTGS) are compositionally biased toward low complexity.

Belongs to the universal ribosomal protein uS2 family.

This is Small ribosomal subunit protein uS2 from Malacoplasma penetrans (strain HF-2) (Mycoplasma penetrans).